We begin with the raw amino-acid sequence, 176 residues long: Oleosin Ara h 14.0103 (176 aa).

At Ala2 the chain carries N-acetylalanine; alternate. 3 helical membrane passes run 50 to 70, 75 to 95, and 96 to 116; these read IIAVLVGVPTGGTLLLLSGLS, IIGLAIATPVFIFFSPVIVPA, and VVTIGLAVTGILTAGACGLTG. A disordered region spans residues 156–176; sequence KTKDAGQEIQTKAQDVKRSSS.

The protein belongs to the oleosin family. As to expression, expressed in seeds (at protein level).

Its subcellular location is the lipid droplet. It is found in the membrane. May have a structural role to stabilize the lipid body during desiccation of the seed by preventing coalescence of the oil. Probably interacts with both lipid and phospholipid moieties of lipid bodies. May also provide recognition signals for specific lipase anchorage in lipolysis during seedling growth. The polypeptide is Oleosin Ara h 14.0103 (Arachis hypogaea (Peanut)).